The primary structure comprises 434 residues: Chaperone SurA (434 aa).

A signal peptide spans 1 to 29; it reads MKTLRLNFRSAILKALGALLLLQGCLAHA. PpiC domains lie at 180–281 and 290–389; these read AEEY…AMLE and VEQS…QVQD.

It is found in the periplasm. It catalyses the reaction [protein]-peptidylproline (omega=180) = [protein]-peptidylproline (omega=0). Its function is as follows. Chaperone involved in the correct folding and assembly of outer membrane proteins. Recognizes specific patterns of aromatic residues and the orientation of their side chains, which are found more frequently in integral outer membrane proteins. May act in both early periplasmic and late outer membrane-associated steps of protein maturation. This chain is Chaperone SurA, found in Hahella chejuensis (strain KCTC 2396).